A 260-amino-acid polypeptide reads, in one-letter code: MARATVVERGEYFLKAVVEGVPPSLVNSLRRVIISELPVMAIDNVVVVNNTSVMYDEMLAHRLGLIPLTTPLQSLPPYEDCVSGLADPSECSTRLTLQVTAEGDTTIYSGDLASDRPDVVPVYKDIPIVKLVKGQSIVLEAYAKLGVAKDHAKWQAATASYYYYPKVVVKSENCREMCKEICRQLENPIECSFNKAWTCKDLCKEGLEVTWDKNKYVFWVESFGNYDVNTALREAFRILKRKFAVFAEELFRRASVETKV.

Belongs to the archaeal Rpo3/eukaryotic RPB3 RNA polymerase subunit family. As to quaternary structure, part of the RNA polymerase complex.

Its subcellular location is the cytoplasm. It carries out the reaction RNA(n) + a ribonucleoside 5'-triphosphate = RNA(n+1) + diphosphate. Functionally, DNA-dependent RNA polymerase (RNAP) catalyzes the transcription of DNA into RNA using the four ribonucleoside triphosphates as substrates. This Pyrobaculum aerophilum (strain ATCC 51768 / DSM 7523 / JCM 9630 / CIP 104966 / NBRC 100827 / IM2) protein is DNA-directed RNA polymerase subunit Rpo3.